A 316-amino-acid chain; its full sequence is MSKLNIIFAGTPDFAAQHLQALLDSEHNVIAVYTQPDKPAGRGKKLQASPVKQLAEQHNIPVYQPKSLRKEDAQAELKALNADVMVVVAYGLILPEAVLNAPKYGCLNVHGSLLPRWRGAAPIQRSIWAGDQETGVTIMQMDIGLDTGDMLHKVTTPIAADETSASLYAKLAELAPPALLEVLNGLESQAFKAEKQDEALSNYAEKLSKEEAKLDWNLTACQLERNIRAFNPWPISFLTLEVDGVEQSVKVYQANVLPHQAKAAGTVLQADKNGIQIATQEGVLNITQLQPSGKKPMSVQDFLNGRADWFAVGKQL.

112–115 (SLLP) serves as a coordination point for (6S)-5,6,7,8-tetrahydrofolate.

Belongs to the Fmt family.

The catalysed reaction is L-methionyl-tRNA(fMet) + (6R)-10-formyltetrahydrofolate = N-formyl-L-methionyl-tRNA(fMet) + (6S)-5,6,7,8-tetrahydrofolate + H(+). Functionally, attaches a formyl group to the free amino group of methionyl-tRNA(fMet). The formyl group appears to play a dual role in the initiator identity of N-formylmethionyl-tRNA by promoting its recognition by IF2 and preventing the misappropriation of this tRNA by the elongation apparatus. This is Methionyl-tRNA formyltransferase from Actinobacillus pleuropneumoniae serotype 7 (strain AP76).